The chain runs to 393 residues: MTNSNRIKLTWISFLSYALTGALVIVTGMVMGNIADYFNLPVSSMSNTFTFLNAGILISIFLNAWLMEIVPLKTQLRFGFLLMVLAVAGLMFSHSLALFSTAMFILGVVSGITMSIGTFLITQMYEGRQRGSRLLFTDSFFSMAGMIFPMIAAFLLAHSIEWYWVYACIGLVYVAIFILTFGCEFPALGKHAPKTDAPVEKEKWGIGVLFLSVAALCYILGQLGFISWVPEYAKGLGMSLNDAGTLVSNFWMSYMVGMWAFSFILRFFDLQRILTVLAGLAAILMYVFNTGTPAHMAWSILALGFFSSAIYTTIITLGSQQTKVPSPKLVNFVLTCGTIGTMLTFVVTGPIVEHSGPQAALLTANGLYAVVFVMCFLLGFVSRHRQHNTLTSH.

The next 12 helical transmembrane spans lie at 11 to 31, 51 to 71, 78 to 98, 101 to 121, 140 to 160, 162 to 182, 206 to 226, 245 to 265, 273 to 293, 297 to 317, 332 to 352, and 361 to 381; these read WISF…GMVM, FLNA…EIVP, FGFL…SLAL, TAMF…TFLI, FFSM…AHSI, WYWV…LTFG, IGVL…LGFI, TLVS…SFIL, ILTV…TGTP, AWSI…IITL, FVLT…GPIV, and LLTA…LGFV.

Belongs to the major facilitator superfamily. TsgA family.

Its subcellular location is the cell inner membrane. This chain is Protein TsgA, found in Shigella boydii serotype 18 (strain CDC 3083-94 / BS512).